A 198-amino-acid chain; its full sequence is Recombination protein RecR (198 aa).

Residues 57 to 72 (CSVCGNLTDDDPCLIC) form a C4-type zinc finger. The Toprim domain maps to 80 to 175 (SVILVVEDSK…KVTRLARGLA (96 aa)).

It belongs to the RecR family.

In terms of biological role, may play a role in DNA repair. It seems to be involved in an RecBC-independent recombinational process of DNA repair. It may act with RecF and RecO. This chain is Recombination protein RecR, found in Streptococcus agalactiae serotype Ia (strain ATCC 27591 / A909 / CDC SS700).